Consider the following 1330-residue polypeptide: Nephrocystin-3 (1330 aa).

The N-myristoyl glycine moiety is linked to residue Gly2. The stretch at 83 to 207 (ELEYAAAEYE…QRLQAQGIQV (125 aa)) forms a coiled coil. 11 TPR repeats span residues 471–504 (IPEE…AHEL), 885–918 (CLLN…KSAM), 920–942 (TEYF…MSCL), 943–976 (ADLY…RETA), 985–1018 (AQSL…SENA), 1027–1060 (AREL…HQKA), 1093–1126 (ARTL…RERV), 1135–1168 (AQSL…RRRA), 1177–1210 (AYTV…RQKS), 1219–1252 (ATAL…YEDS), and 1261–1294 (GETL…KEAE). The interval 1296-1330 (SLLGGKAPSRHSSSGDTFSLKTAHSPNVFLQQGQR) is disordered. The span at 1305–1330 (RHSSSGDTFSLKTAHSPNVFLQQGQR) shows a compositional bias: polar residues.

Interacts with NPHP1 and INVS/NPHP2. Interacts (when myristoylated) with UNC119 and UNC119B; interaction is required for localization to cilium. Interacts with CEP164. Component of a complex containing at least ANKS6, INVS, NEK8 and NPHP3. ANKS6 may organize complex assembly by linking INVS and NPHP3 to NEK8 and INVS may target the complex to the proximal ciliary axoneme. As to expression, widely expressed at low level. Expressed in heart, placenta, liver, skeletal muscle, kidney and pancreas. Expressed at very low level in brain and lung.

The protein resides in the cell projection. The protein localises to the cilium. Functionally, required for normal ciliary development and function. Inhibits disheveled-1-induced canonical Wnt-signaling activity and may also play a role in the control of non-canonical Wnt signaling which regulates planar cell polarity. Probably acts as a molecular switch between different Wnt signaling pathways. Required for proper convergent extension cell movements. The chain is Nephrocystin-3 (NPHP3) from Homo sapiens (Human).